Here is a 374-residue protein sequence, read N- to C-terminus: 1,3,6,8-tetrahydroxynaphthalene synthase (374 aa).

C138 is a catalytic residue.

It belongs to the thiolase-like superfamily. Chalcone/stilbene synthases family. In terms of assembly, homodimer.

The enzyme catalyses 5 malonyl-CoA + 5 H(+) = naphthalene-1,3,6,8-tetrol + 5 CO2 + 5 CoA + H2O. It functions in the pathway pigment biosynthesis; melanin biosynthesis. Functionally, involved in the biosynthesis of melanin but also various secondary metabolites containing a naphthoquinone ring. Catalyzes the iterative condensation of five CoA-linked malonyl units to form a pentaketide intermediate. THNS subsequently catalyzes the dual intramolecular Claisen and aldol condensations of this linear intermediate to produce the fused ring of 1,3,6,8-tetrahydroxynaphthalene (THN). The polypeptide is 1,3,6,8-tetrahydroxynaphthalene synthase (Streptomyces coelicolor (strain ATCC BAA-471 / A3(2) / M145)).